The chain runs to 282 residues: Bifunctional protein FolD (282 aa).

Residues 165–167 (NRS), serine 190, and isoleucine 231 contribute to the NADP(+) site.

It belongs to the tetrahydrofolate dehydrogenase/cyclohydrolase family. As to quaternary structure, homodimer.

It carries out the reaction (6R)-5,10-methylene-5,6,7,8-tetrahydrofolate + NADP(+) = (6R)-5,10-methenyltetrahydrofolate + NADPH. The catalysed reaction is (6R)-5,10-methenyltetrahydrofolate + H2O = (6R)-10-formyltetrahydrofolate + H(+). It functions in the pathway one-carbon metabolism; tetrahydrofolate interconversion. Its function is as follows. Catalyzes the oxidation of 5,10-methylenetetrahydrofolate to 5,10-methenyltetrahydrofolate and then the hydrolysis of 5,10-methenyltetrahydrofolate to 10-formyltetrahydrofolate. The sequence is that of Bifunctional protein FolD from Clostridium botulinum (strain Okra / Type B1).